Here is a 214-residue protein sequence, read N- to C-terminus: ATP phosphoribosyltransferase (214 aa).

The protein belongs to the ATP phosphoribosyltransferase family. Short subfamily. In terms of assembly, heteromultimer composed of HisG and HisZ subunits.

Its subcellular location is the cytoplasm. It catalyses the reaction 1-(5-phospho-beta-D-ribosyl)-ATP + diphosphate = 5-phospho-alpha-D-ribose 1-diphosphate + ATP. It functions in the pathway amino-acid biosynthesis; L-histidine biosynthesis; L-histidine from 5-phospho-alpha-D-ribose 1-diphosphate: step 1/9. Catalyzes the condensation of ATP and 5-phosphoribose 1-diphosphate to form N'-(5'-phosphoribosyl)-ATP (PR-ATP). Has a crucial role in the pathway because the rate of histidine biosynthesis seems to be controlled primarily by regulation of HisG enzymatic activity. The protein is ATP phosphoribosyltransferase of Nostoc punctiforme (strain ATCC 29133 / PCC 73102).